The chain runs to 836 residues: Subtilisin-like protease PIMMS2 (836 aa).

Catalysis depends on charge relay system residues Asp-155, His-222, and Ser-414. Residues 802-836 are disordered; sequence EKKNKYNNSVLKRNEMKSHNNSQKTPKIIPRKYSR.

It belongs to the peptidase S8 family.

Its subcellular location is the cell membrane. It carries out the reaction Hydrolysis of proteins with broad specificity for peptide bonds, and a preference for a large uncharged residue in P1. Hydrolyzes peptide amides.. Probable serine protease which plays a role in ookinete traversal of the mosquito host midgut epithelium. The chain is Subtilisin-like protease PIMMS2 from Plasmodium berghei (strain Anka).